The primary structure comprises 107 residues: Phosphoribosyl-ATP pyrophosphatase (107 aa).

It belongs to the PRA-PH family.

The protein localises to the cytoplasm. The catalysed reaction is 1-(5-phospho-beta-D-ribosyl)-ATP + H2O = 1-(5-phospho-beta-D-ribosyl)-5'-AMP + diphosphate + H(+). It participates in amino-acid biosynthesis; L-histidine biosynthesis; L-histidine from 5-phospho-alpha-D-ribose 1-diphosphate: step 2/9. The protein is Phosphoribosyl-ATP pyrophosphatase (hisE) of Agrobacterium fabrum (strain C58 / ATCC 33970) (Agrobacterium tumefaciens (strain C58)).